A 415-amino-acid chain; its full sequence is Serine hydroxymethyltransferase (415 aa).

(6S)-5,6,7,8-tetrahydrofolate-binding positions include leucine 117 and 121–123 (GHL). Position 226 is an N6-(pyridoxal phosphate)lysine (lysine 226). Glutamate 241 provides a ligand contact to (6S)-5,6,7,8-tetrahydrofolate.

The protein belongs to the SHMT family. Homodimer. Requires pyridoxal 5'-phosphate as cofactor.

The protein resides in the cytoplasm. The enzyme catalyses (6R)-5,10-methylene-5,6,7,8-tetrahydrofolate + glycine + H2O = (6S)-5,6,7,8-tetrahydrofolate + L-serine. It participates in one-carbon metabolism; tetrahydrofolate interconversion. It functions in the pathway amino-acid biosynthesis; glycine biosynthesis; glycine from L-serine: step 1/1. Functionally, catalyzes the reversible interconversion of serine and glycine with tetrahydrofolate (THF) serving as the one-carbon carrier. This reaction serves as the major source of one-carbon groups required for the biosynthesis of purines, thymidylate, methionine, and other important biomolecules. Also exhibits THF-independent aldolase activity toward beta-hydroxyamino acids, producing glycine and aldehydes, via a retro-aldol mechanism. The protein is Serine hydroxymethyltransferase of Bacillus subtilis (strain 168).